A 198-amino-acid polypeptide reads, in one-letter code: Small ribosomal subunit protein uS4c (198 aa).

A disordered region spans residues 17 to 40; the sequence is TLPGLTSKRPKNRKDSMNRSSSRK. Residues 88-154 form the S4 RNA-binding domain; sequence MRLDKSFSIG…IKKNIDLFQR (67 aa).

This sequence belongs to the universal ribosomal protein uS4 family. In terms of assembly, part of the 30S ribosomal subunit. Contacts protein S5. The interaction surface between S4 and S5 is involved in control of translational fidelity.

It is found in the plastid. The protein localises to the chloroplast. In terms of biological role, one of the primary rRNA binding proteins, it binds directly to 16S rRNA where it nucleates assembly of the body of the 30S subunit. Functionally, with S5 and S12 plays an important role in translational accuracy. The protein is Small ribosomal subunit protein uS4c (rps4) of Pinus thunbergii (Japanese black pine).